The following is a 165-amino-acid chain: UPF0262 protein Sala_0765 (165 aa).

This sequence belongs to the UPF0262 family.

The protein is UPF0262 protein Sala_0765 of Sphingopyxis alaskensis (strain DSM 13593 / LMG 18877 / RB2256) (Sphingomonas alaskensis).